A 272-amino-acid polypeptide reads, in one-letter code: 3-methyl-2-oxobutanoate hydroxymethyltransferase (272 aa).

The Mg(2+) site is built by D43 and D82. 3-methyl-2-oxobutanoate contacts are provided by residues 43 to 44 (DS), D82, and K112. A Mg(2+)-binding site is contributed by E114. The Proton acceptor role is filled by E179.

It belongs to the PanB family. In terms of assembly, homodecamer; pentamer of dimers. The cofactor is Mg(2+).

It localises to the cytoplasm. The enzyme catalyses 3-methyl-2-oxobutanoate + (6R)-5,10-methylene-5,6,7,8-tetrahydrofolate + H2O = 2-dehydropantoate + (6S)-5,6,7,8-tetrahydrofolate. Its pathway is cofactor biosynthesis; (R)-pantothenate biosynthesis; (R)-pantoate from 3-methyl-2-oxobutanoate: step 1/2. Catalyzes the reversible reaction in which hydroxymethyl group from 5,10-methylenetetrahydrofolate is transferred onto alpha-ketoisovalerate to form ketopantoate. In Staphylococcus aureus (strain COL), this protein is 3-methyl-2-oxobutanoate hydroxymethyltransferase.